The following is a 732-amino-acid chain: Protein FAR1-RELATED SEQUENCE 4 (732 aa).

The FAR1 domain maps to 11–97 (LFYKDYAKSV…VKEHNHDLLP (87 aa)). The MULE domain occupies 212–308 (VVSFETSYFV…CLWHVLDQLP (97 aa)). The segment at 490–526 (YLVDWDEFKSDIYCSCRSFEYKGYLCRHAIVVLQMSG) adopts an SWIM-type zinc-finger fold. Residues 623–683 (QEENQYGSTS…ETVGEGSQEG (61 aa)) form a disordered region. A compositionally biased stretch (polar residues) spans 624-635 (EENQYGSTSTQI).

It belongs to the FHY3/FAR1 family. As to expression, expressed in hypocotyls, rosette and cauline leaves, inflorescences stems, flowers and siliques.

The protein localises to the nucleus. Its function is as follows. Putative transcription activator involved in regulating light control of development. This chain is Protein FAR1-RELATED SEQUENCE 4 (FRS4), found in Arabidopsis thaliana (Mouse-ear cress).